The chain runs to 501 residues: Vitamin D 25-hydroxylase (501 aa).

The signal sequence occupies residues 1–26 (MWKLWRAEEGAAALGGALFLLLFALG). Position 250 (alanine 250) interacts with substrate. Heme is bound at residue cysteine 448.

It belongs to the cytochrome P450 family. As to quaternary structure, homodimer. Heme is required as a cofactor.

The protein resides in the endoplasmic reticulum membrane. It is found in the microsome membrane. It catalyses the reaction calciol + reduced [NADPH--hemoprotein reductase] + O2 = calcidiol + oxidized [NADPH--hemoprotein reductase] + H2O + H(+). The catalysed reaction is vitamin D2 + reduced [NADPH--hemoprotein reductase] + O2 = 25-hydroxyvitamin D2 + oxidized [NADPH--hemoprotein reductase] + H2O + H(+). The enzyme catalyses 1alpha-hydroxyvitamin D2 + reduced [NADPH--hemoprotein reductase] + O2 = 1alpha,25-dihydroxyvitamin D2 + oxidized [NADPH--hemoprotein reductase] + H2O + H(+). It carries out the reaction alfacalcidol + reduced [NADPH--hemoprotein reductase] + O2 = calcitriol + oxidized [NADPH--hemoprotein reductase] + H2O + H(+). The protein operates within hormone biosynthesis; vitamin D biosynthesis. Functionally, a cytochrome P450 monooxygenase involved in activation of vitamin D precursors. Catalyzes hydroxylation at C-25 of both forms of vitamin D, vitamin D(2) and D(3) (calciol). Can metabolize vitamin D analogs/prodrugs 1alpha-hydroxyvitamin D(2) (doxercalciferol) and 1alpha-hydroxyvitamin D(3) (alfacalcidol) forming 25-hydroxy derivatives. Mechanistically, uses molecular oxygen inserting one oxygen atom into a substrate, and reducing the second into a water molecule, with two electrons provided by NADPH via cytochrome P450 reductase (CPR; NADPH-ferrihemoprotein reductase). In Homo sapiens (Human), this protein is Vitamin D 25-hydroxylase (CYP2R1).